Reading from the N-terminus, the 386-residue chain is tRNA N6-adenosine threonylcarbamoyltransferase (386 aa).

Fe cation contacts are provided by His112 and His116. Residues 134–138, Asp167, Gly180, and Asn322 each bind substrate; that span reads LASGG. A Fe cation-binding site is contributed by Asp350.

Belongs to the KAE1 / TsaD family. Fe(2+) serves as cofactor.

Its subcellular location is the cytoplasm. It carries out the reaction L-threonylcarbamoyladenylate + adenosine(37) in tRNA = N(6)-L-threonylcarbamoyladenosine(37) in tRNA + AMP + H(+). Required for the formation of a threonylcarbamoyl group on adenosine at position 37 (t(6)A37) in tRNAs that read codons beginning with adenine. Is involved in the transfer of the threonylcarbamoyl moiety of threonylcarbamoyl-AMP (TC-AMP) to the N6 group of A37, together with TsaE and TsaB. TsaD likely plays a direct catalytic role in this reaction. This chain is tRNA N6-adenosine threonylcarbamoyltransferase, found in Rickettsia akari (strain Hartford).